The chain runs to 227 residues: UPF0173 metal-dependent hydrolase Oter_4201 (227 aa).

The protein belongs to the UPF0173 family.

This is UPF0173 metal-dependent hydrolase Oter_4201 from Opitutus terrae (strain DSM 11246 / JCM 15787 / PB90-1).